The sequence spans 341 residues: GDP-fucose transporter 1 (341 aa).

10 helical membrane passes run 17 to 37 (LVIGYALCSSLLAVINKLAIT), 41 to 61 (YPGLLTALQYLTCTVAVYLLG), 71 to 91 (FTWDTAKKFLPAAIVFYLAIF), 103 to 123 (DTFIVFRSLTPLLVAIADTVF), 132 to 152 (LTFLSLVVILAGAVGYVATDS), 156 to 176 (LTAYSWALAYLVTITTEMVYI), 187 to 207 (IWGLVLYNNLLSLMIAPVFWF), 231 to 251 (AFSSVAASCVFGFLISYFGFA), 260 to 280 (AFTVTGVVNKFLTVVINVLIW), and 283 to 303 (HATPVGLVCLLFTICGGVGYQ). The tract at residues 316 to 341 (SEKDSEKGEEDEELTQLVPGKLASVV) is disordered.

The protein belongs to the nucleotide-sugar transporter family. GDP-Mannose:GMP antiporter (GMA) (TC 2.A.7.13) subfamily. As to expression, ubiquitous.

The protein resides in the golgi apparatus membrane. Its function is as follows. Acts as the major nucleotide-sugar transporter for the import of GDP-Fucose into the Golgi lumen. Transports GDP-Fucose in a strict counter-exchange mode. Is required for proper plant growth and development. Also acts as a GDP-mannose transporter that may be involved in the import of GDP-mannose from the cytoplasm into the Golgi lumen. This chain is GDP-fucose transporter 1, found in Arabidopsis thaliana (Mouse-ear cress).